The primary structure comprises 334 residues: N-acetyl-gamma-glutamyl-phosphate reductase (334 aa).

The active site involves cysteine 154.

Belongs to the NAGSA dehydrogenase family. Type 1 subfamily.

The protein resides in the cytoplasm. The catalysed reaction is N-acetyl-L-glutamate 5-semialdehyde + phosphate + NADP(+) = N-acetyl-L-glutamyl 5-phosphate + NADPH + H(+). It functions in the pathway amino-acid biosynthesis; L-arginine biosynthesis; N(2)-acetyl-L-ornithine from L-glutamate: step 3/4. Its function is as follows. Catalyzes the NADPH-dependent reduction of N-acetyl-5-glutamyl phosphate to yield N-acetyl-L-glutamate 5-semialdehyde. The protein is N-acetyl-gamma-glutamyl-phosphate reductase of Vibrio vulnificus (strain YJ016).